The following is a 198-amino-acid chain: Outer-membrane lipoprotein carrier protein (198 aa).

The N-terminal stretch at 1–17 (MKKFLFSLCLLSSTVLA) is a signal peptide.

It belongs to the LolA family. In terms of assembly, monomer.

It localises to the periplasm. Participates in the translocation of lipoproteins from the inner membrane to the outer membrane. Only forms a complex with a lipoprotein if the residue after the N-terminal Cys is not an aspartate (The Asp acts as a targeting signal to indicate that the lipoprotein should stay in the inner membrane). The polypeptide is Outer-membrane lipoprotein carrier protein (Aliivibrio fischeri (strain MJ11) (Vibrio fischeri)).